The sequence spans 897 residues: Protein translocase subunit SecA (897 aa).

ATP-binding positions include glutamine 89, 107 to 111 (GEGKT), and aspartate 517. Residues 839–856 (DDAQATHSNPNEQTKQAS) show a composition bias toward polar residues. The disordered stretch occupies residues 839–897 (DDAQATHSNPNEQTKQASITNNIQTQTDQQNTYQRKEKKVGRNEPCPCGSGKKYKKCHG). Residues 857–870 (ITNNIQTQTDQQNT) are compositionally biased toward low complexity. Zn(2+) contacts are provided by cysteine 884, cysteine 886, cysteine 895, and histidine 896.

It belongs to the SecA family. As to quaternary structure, monomer and homodimer. Part of the essential Sec protein translocation apparatus which comprises SecA, SecYEG and auxiliary proteins SecDF-YajC and YidC. It depends on Zn(2+) as a cofactor.

The protein resides in the cell inner membrane. Its subcellular location is the cytoplasm. The catalysed reaction is ATP + H2O + cellular proteinSide 1 = ADP + phosphate + cellular proteinSide 2.. Its function is as follows. Part of the Sec protein translocase complex. Interacts with the SecYEG preprotein conducting channel. Has a central role in coupling the hydrolysis of ATP to the transfer of proteins into and across the cell membrane, serving as an ATP-driven molecular motor driving the stepwise translocation of polypeptide chains across the membrane. This Vesicomyosocius okutanii subsp. Calyptogena okutanii (strain HA) protein is Protein translocase subunit SecA.